A 242-amino-acid chain; its full sequence is Protein HTATIP2 (242 aa).

At Ala2 the chain carries N-acetylalanine. Residues 2–25 (ADKEALPKLREDFKMQNKSVFILG) form a required for interaction with elongation factor EEF1A1 region. Positions 27, 28, 29, 30, 52, 53, 92, 93, 143, 147, 170, and 178 each coordinate NADPH. Tyr143 (proton acceptor) is an active-site residue. Lys147 is a catalytic residue.

In terms of assembly, monomer. Forms homodimers during oxidative stress. Interacts (via N-terminus) with elongation factor EEF1A1 (via middle-region); the interaction is direct and competes with EEF1A1 binding to guanyl-nucleotide exchange factor EEF1B2, thereby inhibiting GDP for GTP exchange and reactivation of EEF1A1. Interacts with nuclear transport receptors XPO4, IPO5/RANBP5, IPO7, IPO9 and KPNB1 as well as GCN1L1/GCN1 and LRPPRC probably through their HEAT repeats. Binds NCOA5/CIA.

It is found in the cytoplasm. In terms of biological role, represses translation by preventing reactivation of elongation factor eEF1A. May also inhibit nuclear import by competing with nuclear import substrates for binding to a subset of nuclear transport receptors. Has additionally been proposed to act as a redox sensor involved in cellular oxidative stress surveillance. This is Protein HTATIP2 from Mus musculus (Mouse).